The primary structure comprises 237 residues: Large ribosomal subunit protein uL3 (237 aa).

2 disordered regions span residues alanine 133–lysine 155 and proline 213–glutamate 237. Polar residues predominate over residues histidine 135–arginine 150. Glutamine 151 bears the N5-methylglutamine mark. Residues alanine 220 to glutamate 237 are compositionally biased toward low complexity.

The protein belongs to the universal ribosomal protein uL3 family. As to quaternary structure, part of the 50S ribosomal subunit. Forms a cluster with proteins L14 and L19. Post-translationally, methylated by PrmB.

Its function is as follows. One of the primary rRNA binding proteins, it binds directly near the 3'-end of the 23S rRNA, where it nucleates assembly of the 50S subunit. This is Large ribosomal subunit protein uL3 from Brucella canis (strain ATCC 23365 / NCTC 10854 / RM-666).